Consider the following 271-residue polypeptide: Putative phosphoenolpyruvate synthase regulatory protein (271 aa).

152-159 contributes to the ADP binding site; it reads GASRSGKT.

It belongs to the pyruvate, phosphate/water dikinase regulatory protein family. PSRP subfamily.

It catalyses the reaction [pyruvate, water dikinase] + ADP = [pyruvate, water dikinase]-phosphate + AMP + H(+). The catalysed reaction is [pyruvate, water dikinase]-phosphate + phosphate + H(+) = [pyruvate, water dikinase] + diphosphate. Bifunctional serine/threonine kinase and phosphorylase involved in the regulation of the phosphoenolpyruvate synthase (PEPS) by catalyzing its phosphorylation/dephosphorylation. This is Putative phosphoenolpyruvate synthase regulatory protein from Marinobacter nauticus (strain ATCC 700491 / DSM 11845 / VT8) (Marinobacter aquaeolei).